A 60-amino-acid chain; its full sequence is MRKLRGGQTRETRKQKQERREENQKIQQQLKTIVLPICGVVFLCIVAYVFLKTRPRFEEL.

The segment at 1–22 (MRKLRGGQTRETRKQKQERREE) is disordered. A compositionally biased stretch (basic and acidic residues) spans 8 to 22 (QTRETRKQKQERREE). A coiled-coil region spans residues 8–34 (QTRETRKQKQERREENQKIQQQLKTIV). A helical transmembrane segment spans residues 30-50 (LKTIVLPICGVVFLCIVAYVF).

It belongs to the SMCO4 family.

The protein localises to the membrane. This chain is Single-pass membrane and coiled-coil domain-containing protein 4 homolog, found in Culex quinquefasciatus (Southern house mosquito).